The chain runs to 347 residues: 4-hydroxy-2-oxovalerate aldolase 1 (347 aa).

The region spanning 8-261 (VTLYDMSLLX…ETGIDLYKIM (254 aa)) is the Pyruvate carboxyltransferase domain. Catalysis depends on His20, which acts as the Proton acceptor. Residues Ser171 and His200 each coordinate substrate. Mn(2+) contacts are provided by His200 and His202. Tyr291 serves as a coordination point for substrate.

Belongs to the 4-hydroxy-2-oxovalerate aldolase family.

It catalyses the reaction (S)-4-hydroxy-2-oxopentanoate = acetaldehyde + pyruvate. In Metapseudomonas furukawaii (Pseudomonas furukawaii), this protein is 4-hydroxy-2-oxovalerate aldolase 1 (salH).